The primary structure comprises 280 residues: Bifunctional protein FolD (280 aa).

NADP(+)-binding positions include 161–163 (GRS), Ser186, and Ile227.

Belongs to the tetrahydrofolate dehydrogenase/cyclohydrolase family. In terms of assembly, homodimer.

It carries out the reaction (6R)-5,10-methylene-5,6,7,8-tetrahydrofolate + NADP(+) = (6R)-5,10-methenyltetrahydrofolate + NADPH. The catalysed reaction is (6R)-5,10-methenyltetrahydrofolate + H2O = (6R)-10-formyltetrahydrofolate + H(+). It functions in the pathway one-carbon metabolism; tetrahydrofolate interconversion. Catalyzes the oxidation of 5,10-methylenetetrahydrofolate to 5,10-methenyltetrahydrofolate and then the hydrolysis of 5,10-methenyltetrahydrofolate to 10-formyltetrahydrofolate. The sequence is that of Bifunctional protein FolD from Caldanaerobacter subterraneus subsp. tengcongensis (strain DSM 15242 / JCM 11007 / NBRC 100824 / MB4) (Thermoanaerobacter tengcongensis).